Reading from the N-terminus, the 277-residue chain is Type IV methyl-directed restriction enzyme EcoKMcrA (277 aa).

The HNH domain maps to 207–257 (CENCGKNAPFYLNDGNPYLEVHHVIPLSSGGADTTDNCVALCPNCHRELHY).

Functionally, restriction of 5-methyl and 5-hydroxymethylcytosines at the specific DNA sequence 5'-C(me)CGG-3'. This Escherichia coli (strain K12) protein is Type IV methyl-directed restriction enzyme EcoKMcrA.